A 107-amino-acid chain; its full sequence is uncharacterized protein (107 aa).

A disordered region spans residues 88 to 107; it reads GSTPWGSGRQVNAARPIGGR.

Its subcellular location is the virion. This is an uncharacterized protein from Acanthamoeba polyphaga (Amoeba).